An 837-amino-acid chain; its full sequence is Probable aldehyde oxidase 4 (837 aa).

The region spanning 9 to 98 (ERVVFELNGE…FCSIITTEGL (90 aa)) is the 2Fe-2S ferredoxin-type domain. Positions 50, 55, 58, and 80 each coordinate [2Fe-2S] cluster. An FAD-binding PCMH-type domain is found at 240–427 (ISGPREGWYC…LSIFIPHWAS (188 aa)).

Belongs to the xanthine dehydrogenase family. As to quaternary structure, aldehyde oxidases (AO) are homodimers and heterodimers of AO subunits. It depends on [2Fe-2S] cluster as a cofactor. Requires FAD as cofactor. Mo-molybdopterin serves as cofactor.

The catalysed reaction is an aldehyde + O2 + H2O = a carboxylate + H2O2 + H(+). This chain is Probable aldehyde oxidase 4, found in Oryza sativa subsp. japonica (Rice).